The chain runs to 396 residues: Tryptophan synthase beta chain (396 aa).

The residue at position 86 (lysine 86) is an N6-(pyridoxal phosphate)lysine.

Belongs to the TrpB family. In terms of assembly, tetramer of two alpha and two beta chains. Pyridoxal 5'-phosphate is required as a cofactor.

It carries out the reaction (1S,2R)-1-C-(indol-3-yl)glycerol 3-phosphate + L-serine = D-glyceraldehyde 3-phosphate + L-tryptophan + H2O. It functions in the pathway amino-acid biosynthesis; L-tryptophan biosynthesis; L-tryptophan from chorismate: step 5/5. The beta subunit is responsible for the synthesis of L-tryptophan from indole and L-serine. The protein is Tryptophan synthase beta chain of Blochmanniella pennsylvanica (strain BPEN).